The following is a 577-amino-acid chain: Myb-like protein N (577 aa).

Disordered regions lie at residues 1-23 (MMTINNNNLNNSNNINNNNNIYT), 206-225 (TPFSLQCPNSPNSTSSSPLN), and 240-264 (SSSSSASSSSTSSQPPSPQTLLSSS). Positions 213–225 (PNSPNSTSSSPLN) are enriched in low complexity. HTH myb-type domains follow at residues 403–465 (KKST…CPAI) and 466–517 (RKGS…SREV). 2 consecutive DNA-binding regions (H-T-H motif) follow at residues 437 to 461 (WKKIALQIGGGKTGAQCAQHWKRVL) and 489 to 513 (WKNVASEIRTRTDIQCRYQYFKSCM). In terms of domain architecture, Myb-like spans 518–570 (PWTPKEDEILQKKVIENKQDSTKEIGWMDLSKAMARARQTKIPRTALECKIRF).

The protein resides in the nucleus. This Dictyostelium discoideum (Social amoeba) protein is Myb-like protein N (mybN).